Reading from the N-terminus, the 746-residue chain is Polyphosphate kinase (746 aa).

Residues 1–17 are compositionally biased toward polar residues; it reads MRQPNTQAEAQHTQPSV. The tract at residues 1 to 60 is disordered; it reads MRQPNTQAEAQHTQPSVGSIAAHRPNTVAATVSGLEPDIDADLDAYEESEESQDGGARLP. The segment covering 37 to 53 has biased composition (acidic residues); the sequence is PDIDADLDAYEESEESQ. Asn-102 is a binding site for ATP. The Mg(2+) site is built by Arg-429 and Arg-459. The Phosphohistidine intermediate role is filled by His-489. Residues Tyr-522, Arg-618, and His-646 each contribute to the ATP site.

It belongs to the polyphosphate kinase 1 (PPK1) family. Requires Mg(2+) as cofactor. An intermediate of this reaction is the autophosphorylated ppk in which a phosphate is covalently linked to a histidine residue through a N-P bond.

It carries out the reaction [phosphate](n) + ATP = [phosphate](n+1) + ADP. Its function is as follows. Catalyzes the reversible transfer of the terminal phosphate of ATP to form a long-chain polyphosphate (polyP). The polypeptide is Polyphosphate kinase (Streptomyces coelicolor (strain ATCC BAA-471 / A3(2) / M145)).